The primary structure comprises 248 residues: Probable transcriptional regulatory protein BT_2363 (248 aa).

This sequence belongs to the TACO1 family.

The protein resides in the cytoplasm. In Bartonella tribocorum (strain CIP 105476 / IBS 506), this protein is Probable transcriptional regulatory protein BT_2363.